Consider the following 832-residue polypeptide: Conserved oligomeric Golgi complex subunit 5 (832 aa).

Composition is skewed to pro residues over residues 1 to 11 (MALPPSSPSPS) and 23 to 38 (NPPP…PPQT). The disordered stretch occupies residues 1–49 (MALPPSSPSPSSPSLQRLSTFKNPPPSSLSSGAPPPQTPSSSSSSPLDS). Residues 39–49 (PSSSSSSPLDS) show a composition bias toward low complexity.

This sequence belongs to the COG5 family. As to quaternary structure, homodimer. Component of the conserved oligomeric Golgi complex which is composed of eight different subunits and is required for normal Golgi morphology and localization. Interacts with COG3, COG6, COG7 and COG8.

Its subcellular location is the golgi apparatus membrane. Required for normal Golgi function. The polypeptide is Conserved oligomeric Golgi complex subunit 5 (Arabidopsis thaliana (Mouse-ear cress)).